The sequence spans 379 residues: Homoserine O-acetyltransferase (379 aa).

The region spanning 52–356 (NVVVVLHALT…VYGHDGFLVE (305 aa)) is the AB hydrolase-1 domain. S157 functions as the Nucleophile in the catalytic mechanism. R227 is a binding site for substrate. Active-site residues include D320 and H350. Position 351 (D351) interacts with substrate.

This sequence belongs to the AB hydrolase superfamily. MetX family. Homodimer.

It is found in the cytoplasm. The enzyme catalyses L-homoserine + acetyl-CoA = O-acetyl-L-homoserine + CoA. Its pathway is amino-acid biosynthesis; L-methionine biosynthesis via de novo pathway; O-acetyl-L-homoserine from L-homoserine: step 1/1. In terms of biological role, transfers an acetyl group from acetyl-CoA to L-homoserine, forming acetyl-L-homoserine. The polypeptide is Homoserine O-acetyltransferase (Mycobacterium tuberculosis (strain CDC 1551 / Oshkosh)).